Consider the following 337-residue polypeptide: Adenine deaminase (337 aa).

Residues H17, H19, and H197 each coordinate Zn(2+). Catalysis depends on E200, which acts as the Proton donor. Residue D278 coordinates Zn(2+). D279 is a substrate binding site.

It belongs to the metallo-dependent hydrolases superfamily. Adenosine and AMP deaminases family. Adenine deaminase type 2 subfamily. Zn(2+) serves as cofactor.

It catalyses the reaction adenine + H2O + H(+) = hypoxanthine + NH4(+). Catalyzes the hydrolytic deamination of adenine to hypoxanthine. Plays an important role in the purine salvage pathway and in nitrogen catabolism. The sequence is that of Adenine deaminase from Zymomonas mobilis subsp. mobilis (strain ATCC 31821 / ZM4 / CP4).